A 702-amino-acid chain; its full sequence is Protein-glucosylgalactosylhydroxylysine glucosidase (702 aa).

310–311 (WD) provides a ligand contact to substrate. Catalysis depends on Glu-440, which acts as the Proton donor. Substrate is bound at residue 508 to 509 (KQ).

It belongs to the glycosyl hydrolase 65 family.

The catalysed reaction is (5R)-5-O-[alpha-D-glucosyl-(1-&gt;2)-beta-D-galactosyl]-5-hydroxy-L-lysyl-[collagen] + H2O = (5R)-5-O-(beta-D-galactosyl)-5-hydroxy-L-lysyl-[collagen] + D-glucose. Its function is as follows. Catalyzes the hydrolysis of glucose from the disaccharide unit linked to hydroxylysine residues of collagen and collagen-like proteins. The chain is Protein-glucosylgalactosylhydroxylysine glucosidase from Gallus gallus (Chicken).